The sequence spans 476 residues: tRNA(Ile)-lysidine synthase (476 aa).

26-31 is a binding site for ATP; it reads SGGSDS.

This sequence belongs to the tRNA(Ile)-lysidine synthase family.

The protein localises to the cytoplasm. It catalyses the reaction cytidine(34) in tRNA(Ile2) + L-lysine + ATP = lysidine(34) in tRNA(Ile2) + AMP + diphosphate + H(+). Ligates lysine onto the cytidine present at position 34 of the AUA codon-specific tRNA(Ile) that contains the anticodon CAU, in an ATP-dependent manner. Cytidine is converted to lysidine, thus changing the amino acid specificity of the tRNA from methionine to isoleucine. This Bartonella quintana (strain Toulouse) (Rochalimaea quintana) protein is tRNA(Ile)-lysidine synthase.